A 238-amino-acid polypeptide reads, in one-letter code: Expansin-like protein 5 (238 aa).

The first 21 residues, 1-21 (MRINFKLILIILTSFYGIINC), serve as a signal peptide directing secretion. The region spanning 45-145 (NGNCGFGKLT…VKVPCRVSGN (101 aa)) is the Expansin-like EG45 domain. Intrachain disulfides connect cysteine 48-cysteine 78 and cysteine 81-cysteine 140. Asparagine 89 carries N-linked (GlcNAc...) asparagine glycosylation.

This sequence belongs to the expansin family. Expansin A subfamily.

The protein resides in the secreted. Its function is as follows. May serve to lubricate the movement of the cellulose microfibrils during cell growth and wall extension and/or may serve to maintain the fluid state of the slug cell wall. This Dictyostelium discoideum (Social amoeba) protein is Expansin-like protein 5 (expl5).